A 119-amino-acid chain; its full sequence is Developmental pluripotency-associated protein 5B/5C (119 aa).

Positions 24–86 (PEVFQVQSLV…SIKVRAKWLL (63 aa)) constitute a KH; atypical domain.

It belongs to the KHDC1 family.

The protein resides in the cytoplasm. Its function is as follows. Involved in the maintenance of embryonic stem (ES) cell pluripotency. Dispensable for self-renewal of pluripotent ES cells and establishment of germ cells. Associates with specific target mRNAs. In Mus musculus (Mouse), this protein is Developmental pluripotency-associated protein 5B/5C.